The following is a 118-amino-acid chain: Putative pterin-4-alpha-carbinolamine dehydratase (118 aa).

This sequence belongs to the pterin-4-alpha-carbinolamine dehydratase family.

It catalyses the reaction (4aS,6R)-4a-hydroxy-L-erythro-5,6,7,8-tetrahydrobiopterin = (6R)-L-erythro-6,7-dihydrobiopterin + H2O. This Xanthomonas euvesicatoria pv. vesicatoria (strain 85-10) (Xanthomonas campestris pv. vesicatoria) protein is Putative pterin-4-alpha-carbinolamine dehydratase.